The following is a 247-amino-acid chain: Ribonuclease 3 (247 aa).

Positions 23-149 (HADLLERLGV…LLGAIFRQHG (127 aa)) constitute an RNase III domain. Mg(2+) is bound at residue glutamate 62. The active site involves aspartate 66. Mg(2+) is bound by residues aspartate 135 and glutamate 138. The active site involves glutamate 138. The 69-residue stretch at 176 to 244 (DWKTTLQEEL…ARQAFLKLRE (69 aa)) folds into the DRBM domain.

It belongs to the ribonuclease III family. In terms of assembly, homodimer. It depends on Mg(2+) as a cofactor.

Its subcellular location is the cytoplasm. It catalyses the reaction Endonucleolytic cleavage to 5'-phosphomonoester.. Digests double-stranded RNA. Involved in the processing of primary rRNA transcript to yield the immediate precursors to the large and small rRNAs (23S and 16S). Processes some mRNAs, and tRNAs when they are encoded in the rRNA operon. Processes pre-crRNA and tracrRNA of type II CRISPR loci if present in the organism. The chain is Ribonuclease 3 from Corynebacterium efficiens (strain DSM 44549 / YS-314 / AJ 12310 / JCM 11189 / NBRC 100395).